We begin with the raw amino-acid sequence, 348 residues long: N-(sulfonatooxy)prop-2-enimidothioate sulfolyase (348 aa).

Kelch repeat units lie at residues 1–33 (MART…VIGD), 34–85 (KLYC…VAVG), 87–133 (KLYV…FHSM), 139–194 (HVYV…VVQG), 209–254 (KIPT…FAHA), 259–314 (YIII…ASTT), and 322–348 (GLLV…NSST). A (Z)-N-(sulfonatooxy)alkanimidothioate-binding residues include E46, R94, T129, F130, and R157. Residue R94 is the Proton donor of the active site. The active-site Proton donor is the R157. Catalysis depends on E220, which acts as the Proton acceptor. E266 is a Fe(2+) binding site. R269 is an a (Z)-N-(sulfonatooxy)alkanimidothioate binding site. The Fe(2+) site is built by D270 and H274. Residues W309 and V310 each coordinate a (Z)-N-(sulfonatooxy)alkanimidothioate.

Homodimer. The cofactor is Fe(2+). As to expression, expressed constitutively in roots, stems, leaves, flowers, siliques and seedlings.

The catalysed reaction is (Z)-N-(sulfonatooxy)prop-2-enimidothioate = allyl thiocyanate + sulfate. It catalyses the reaction (Z)-N-(sulfonatooxy)prop-2-enimidothioate = 2-(thiiran-2-yl)acetonitrile + sulfate. The enzyme catalyses (Z)-N-(sulfonatooxy)prop-2-enimidothioate = allyl isothiocyanate + sulfate. It carries out the reaction (Z)-phenyl-N-(sulfonatooxy)methanimidothioate = phenylacetonitrile + sulfur + sulfate. The catalysed reaction is glucoerucin + H2O = (Z)-4-methylsulfanylbutyl-N-(sulfonatooxy)methanimidothioate + D-glucose. It catalyses the reaction (Z)-4-methylsulfanylbutyl-N-(sulfonatooxy)methanimidothioate = 5-(methylsulfanyl)pentanenitrile + sulfur + sulfate + H(+). Stimulated by the presence of Fe(2+) leading to an increase formation of both thiocyanate and epithionitrile with allylglucosinolate as substrate in the presence of myrosinase. Repressed by EDTA. In terms of biological role, specifier protein that contributes to constitutive and herbivore-induced simple nitrile formation. Catalyzes allylthiocyanate and corresponding epithionitrile formation from allylglucosinolate in the presence of myrosinase. Also converts aliphatic glucosinolates, such as indol-3-ylmethylglucosinolate, 4-methylsulfinylbutylglucosinolate, 4-methylthiobutyl- and benzylisothiocyanate, to simple nitriles. This is N-(sulfonatooxy)prop-2-enimidothioate sulfolyase from Thlaspi arvense (Field penny-cress).